The chain runs to 1012 residues: Structural polyprotein (1012 aa).

Position 30 (Asp30) interacts with a divalent metal cation. Positions 513-755 (ADKGYEVVAN…AGRQYHLAMA (243 aa)) constitute a Peptidase S50 domain. Ser652 acts as the Nucleophile in catalysis. Lys692 is a catalytic residue. Residues 970–1012 (MEMKHRNPRRAPPKPKPKPNAPSQRPPGRLGRWIRTVSDEDLE) form a disordered region. The span at 975–986 (RNPRRAPPKPKP) shows a compositional bias: basic residues. The interval 1003–1012 (IRTVSDEDLE) is interaction with VP1 protein.

As to quaternary structure, homotrimer. A central divalent metal stabilizes the VP2 trimer. Interacts with host ITGA4/ITGB1. In terms of assembly, homodimer. Interacts (via C-terminus) with VP1 in the cytoplasm. Interacts with VP2. Specific enzymatic cleavages yield mature proteins. The capsid assembly seems to be regulated by polyprotein processing. The protease VP4 cleaves itself off the polyprotein, thus releasing pre-VP2 and VP3 within the infected cell. During capsid assembly, the C-terminus of pre-VP2 is further processed by VP4, giving rise to VP2, the external capsid protein and three small peptides that all stay closely associated with the capsid.

Its subcellular location is the virion. The protein localises to the host cytoplasm. Functionally, capsid protein VP2 self assembles to form an icosahedral capsid with a T=13 symmetry, about 70 nm in diameter, and consisting of 260 VP2 trimers. The capsid encapsulates the genomic dsRNA. VP2 is also involved in attachment and entry into the host cell by interacting with host ITGA4/ITGB1. The precursor of VP2 plays an important role in capsid assembly. First, pre-VP2 and VP2 oligomers assemble to form a procapsid. Then, the pre-VP2 intermediates may be processed into VP2 proteins by proteolytic cleavage mediated by VP4 to obtain the mature virion. The final capsid is composed of pentamers and hexamers but VP2 has a natural tendency to assemble into all-pentameric structures. Therefore pre-VP2 may be required to allow formation of the hexameric structures. In terms of biological role, protease VP4 is a serine protease that cleaves the polyprotein into its final products. Pre-VP2 is first partially cleaved, and may be completely processed by VP4 upon capsid maturation. Its function is as follows. Capsid protein VP3 plays a key role in virion assembly by providing a scaffold for the capsid made of VP2. May self-assemble to form a T=4-like icosahedral inner-capsid composed of at least 180 trimers. Plays a role in genomic RNA packaging by recruiting VP1 into the capsid and interacting with the dsRNA genome segments to form a ribonucleoprotein complex. Additionally, the interaction of the VP3 C-terminal tail with VP1 removes the inherent structural blockade of the polymerase active site. Thus, VP3 can also function as a transcriptional activator. Functionally, structural peptide 1 is a small peptide derived from pre-VP2 C-terminus. It destabilizes and perforates cell membranes, suggesting a role during entry. Structural peptide 2 is a small peptide derived from pVP2 C-terminus. It is not essential for the virus viability, but viral growth is affected when missing. In terms of biological role, structural peptide 3 is a small peptide derived from pVP2 C-terminus. It is not essential for the virus viability, but viral growth is affected when missing. Its function is as follows. Structural peptide 4 is a small peptide derived from pVP2 C-terminus. It is essential for the virus viability. In Avian infectious bursal disease virus (strain Australian 002-73) (IBDV), this protein is Structural polyprotein.